We begin with the raw amino-acid sequence, 495 residues long: MADRNLRDLLAPWVAGLPARELREMTLDSRVAAAGDLFVAVVGHQADGRRYIPQAIAQGVAAIIAEAKDEASDGEIREMHGVPVVYLSQLNERLSALAGRFYHEPSENMRLVAVTGTNGKTTTTQLLAQWSQLLGETSAVMGTVGNGLLGKVIPTENTTGSAVDVQHVLASLVAQGATFGAMEVSSHGLVQHRVAALKFAASVFTNLSRDHLDYHGDMAHYEAAKWMLYSTHHHGQAIVNADDEVGRRWLASLPDAVAVSMEGHINPNCHGRWLKAEAVEYHDRGATIRFASSWGEGEIESRLMGAFNVSNLLLALATLLALGYPLTDLLKTAARLQPVCGRMEVFTAPGKPTVVVDYAHTPDALEKALQAARLHCAGKLWCVFGCGGDRDKGKRPLMGAIAEEFADIVVVTDDNPRTEEPRAIINDILAGMLDAGQVRVMEGRAEAVTNAIMQAKDNDVVLIAGKGHEDYQIVGTQRLDYSDRVTAARLLGVIA.

UDP-N-acetyl-alpha-D-muramoyl-L-alanyl-D-glutamate is bound by residues leucine 27, serine 29, and 44 to 46 (HQA). 116-122 (GTNGKTT) provides a ligand contact to ATP. UDP-N-acetyl-alpha-D-muramoyl-L-alanyl-D-glutamate-binding positions include asparagine 157, 158 to 159 (TT), serine 185, glutamine 191, and arginine 193. N6-carboxylysine is present on lysine 225. Meso-2,6-diaminopimelate contacts are provided by residues arginine 390, 414-417 (DNPR), glycine 465, and glutamate 469. Positions 414–417 (DNPR) match the Meso-diaminopimelate recognition motif motif.

This sequence belongs to the MurCDEF family. MurE subfamily. It depends on Mg(2+) as a cofactor. Post-translationally, carboxylation is probably crucial for Mg(2+) binding and, consequently, for the gamma-phosphate positioning of ATP.

The protein localises to the cytoplasm. It carries out the reaction UDP-N-acetyl-alpha-D-muramoyl-L-alanyl-D-glutamate + meso-2,6-diaminopimelate + ATP = UDP-N-acetyl-alpha-D-muramoyl-L-alanyl-gamma-D-glutamyl-meso-2,6-diaminopimelate + ADP + phosphate + H(+). It functions in the pathway cell wall biogenesis; peptidoglycan biosynthesis. Functionally, catalyzes the addition of meso-diaminopimelic acid to the nucleotide precursor UDP-N-acetylmuramoyl-L-alanyl-D-glutamate (UMAG) in the biosynthesis of bacterial cell-wall peptidoglycan. The sequence is that of UDP-N-acetylmuramoyl-L-alanyl-D-glutamate--2,6-diaminopimelate ligase from Salmonella typhimurium (strain LT2 / SGSC1412 / ATCC 700720).